Consider the following 327-residue polypeptide: DNA-directed RNA polymerase subunit alpha (327 aa).

An alpha N-terminal domain (alpha-NTD) region spans residues 1 to 231; that stretch reads MIYQMQMPAK…DHVTFFANFS (231 aa). An alpha C-terminal domain (alpha-CTD) region spans residues 252–327; the sequence is MRRLFHTKIE…GMDITKYQMK (76 aa).

Belongs to the RNA polymerase alpha chain family. Homodimer. The RNAP catalytic core consists of 2 alpha, 1 beta, 1 beta' and 1 omega subunit. When a sigma factor is associated with the core the holoenzyme is formed, which can initiate transcription.

It carries out the reaction RNA(n) + a ribonucleoside 5'-triphosphate = RNA(n+1) + diphosphate. Its function is as follows. DNA-dependent RNA polymerase catalyzes the transcription of DNA into RNA using the four ribonucleoside triphosphates as substrates. The chain is DNA-directed RNA polymerase subunit alpha from Pelodictyon phaeoclathratiforme (strain DSM 5477 / BU-1).